Here is a 1469-residue protein sequence, read N- to C-terminus: ATP-binding cassette transporter abc4 (1469 aa).

Transmembrane regions (helical) follow at residues 21-40 (SLYY…FPTH), 55-74 (YSLE…RWIT), 94-114 (HGIL…FMFV), 121-141 (AFSD…LFLL), 160-180 (VLLN…PFFF), 189-209 (YSPF…IPLF), 296-316 (ILGM…SPIA), and 337-357 (WIVL…FYLF). An ABC transmembrane type-1 1 domain is found at 296–580 (ILGMGVSSFM…IAYLMRQIVQ (285 aa)). A glycan (N-linked (GlcNAc...) asparagine) is linked at Asn-386. Transmembrane regions (helical) follow at residues 412–432 (EFIH…YLLQ) and 441–461 (VGLA…PLVA). An N-linked (GlcNAc...) asparagine glycan is attached at Asn-510. 2 helical membrane-spanning segments follow: residues 524-544 (VLVE…FTTI) and 553-573 (IAFT…WIAY). In terms of domain architecture, ABC transporter 1 spans 611–840 (IGFFNASLTW…LAEQAASASE (230 aa)). Asn-615 carries N-linked (GlcNAc...) asparagine glycosylation. 648-655 (GPTGSGKS) contacts ATP. 3 N-linked (GlcNAc...) asparagine glycosylation sites follow: Asn-691, Asn-790, and Asn-815. A helical membrane pass occupies residues 894 to 914 (GFYVAAVLLFFVTTQATSILI). The ABC transmembrane type-1 2 domain occupies 897–1176 (VAAVLLFFVT…FVRSCNSLQA (280 aa)). N-linked (GlcNAc...) asparagine glycosylation occurs at Asn-923. A helical transmembrane segment spans residues 936 to 956 (FLFVYGTMLLAYSLLDFLRTV). Asn-1007 is a glycosylation site (N-linked (GlcNAc...) asparagine). Helical transmembrane passes span 1009-1029 (SGWL…ILSV), 1033-1053 (MPIF…FGLL), 1065-1085 (ISIY…GVSV), 1120-1140 (VAVR…LIAL), and 1148-1168 (GVVG…LLFV). The ABC transporter 2 domain occupies 1214-1453 (FNHVSVSYSA…NGHFRRMCDG (240 aa)). 1246 to 1253 (GRTGSGKS) contacts ATP. Asn-1355 carries N-linked (GlcNAc...) asparagine glycosylation.

It belongs to the ABC transporter superfamily. ABCC family. Conjugate transporter (TC 3.A.1.208) subfamily.

It localises to the vacuole membrane. The enzyme catalyses ATP + H2O + xenobioticSide 1 = ADP + phosphate + xenobioticSide 2.. Its function is as follows. Involved in detoxification of xenobiotics, and vacuolar sequestration of glutathione S-conjugates. Together with abc2, required for accumulation of a red pigment (ade pigment) in the vacuole of a mutant affected in the adenine biosynthetic pathway. The polypeptide is ATP-binding cassette transporter abc4 (Schizosaccharomyces pombe (strain 972 / ATCC 24843) (Fission yeast)).